Consider the following 284-residue polypeptide: Diaminopimelate epimerase (284 aa).

Asn14 and Asn67 together coordinate substrate. Cys76 (proton donor) is an active-site residue. Residues 77–78 (GN), Asn166, Asn199, and 217–218 (ER) each bind substrate. Cys226 serves as the catalytic Proton acceptor. Residue 227 to 228 (GT) coordinates substrate.

This sequence belongs to the diaminopimelate epimerase family. As to quaternary structure, homodimer.

Its subcellular location is the cytoplasm. It catalyses the reaction (2S,6S)-2,6-diaminopimelate = meso-2,6-diaminopimelate. The protein operates within amino-acid biosynthesis; L-lysine biosynthesis via DAP pathway; DL-2,6-diaminopimelate from LL-2,6-diaminopimelate: step 1/1. Catalyzes the stereoinversion of LL-2,6-diaminopimelate (L,L-DAP) to meso-diaminopimelate (meso-DAP), a precursor of L-lysine and an essential component of the bacterial peptidoglycan. The polypeptide is Diaminopimelate epimerase (Bacillus velezensis (strain DSM 23117 / BGSC 10A6 / LMG 26770 / FZB42) (Bacillus amyloliquefaciens subsp. plantarum)).